We begin with the raw amino-acid sequence, 202 residues long: MAKYQTIEAAVRSEFGKGSARRARVAGQIPAVVYGADVESNLHVTVDHRTFAALVRQEGVNAVLELDIEGQKHLTMIKHIDQNVLTFNIDHLDLLAIKRGEKVEVDVPVIVEGEPAPGTMWVQDADTIKVEADVLSIPEEFKVSIEGLEFGAQVTAADIELDGDTTLVEDPETLIVNIVYPEVEAEETEDDEAASEGEEAAE.

Positions 182–202 (EVEAEETEDDEAASEGEEAAE) are disordered. Over residues 183–202 (VEAEETEDDEAASEGEEAAE) the composition is skewed to acidic residues.

This sequence belongs to the bacterial ribosomal protein bL25 family. CTC subfamily. As to quaternary structure, part of the 50S ribosomal subunit; part of the 5S rRNA/L5/L18/L25 subcomplex. Contacts the 5S rRNA. Binds to the 5S rRNA independently of L5 and L18.

This is one of the proteins that binds to the 5S RNA in the ribosome where it forms part of the central protuberance. The chain is Large ribosomal subunit protein bL25 from Corynebacterium glutamicum (strain R).